The chain runs to 34 residues: Non-cysteinic peptide Bs 10 (34 aa).

The segment at 1 to 34 (VTMGYIKDGDGKKIAKKKNKNGRKHVEIDLNKVG) is disordered. Residues 14–23 (IAKKKNKNGR) show a composition bias toward basic residues. Over residues 24 to 34 (KHVEIDLNKVG) the composition is skewed to basic and acidic residues.

In terms of tissue distribution, expressed by the venom gland.

The protein resides in the secreted. The chain is Non-cysteinic peptide Bs 10 from Hottentotta tamulus sindicus (Scorpion).